A 197-amino-acid polypeptide reads, in one-letter code: MSQYQNQYGAQTGMTDEYGNPVNQVDQYGNPISGGGFTGEAGRQHFGTTGGATDHGHGHGQQHRGVDQTTGYGTHTGGVGGYGTNPEYGNTNTGSGYGTGTGYGGSGTNEYVREDHHGDKKGVMDKIKEKIPGTEQSRTNTDGAGYGSTGYGASGGGIGNTGQEYVREEHRVDHGEKKGIMDKIKEKLPGTGGCTGH.

Residues 1–14 (MSQYQNQYGAQTGM) are compositionally biased toward polar residues. Disordered regions lie at residues 1-86 (MSQY…GTNP) and 133-197 (GTEQ…CTGH). Tandem repeats lie at residues 16–21 (DEYGNP) and 26–31 (DQYGNP). Positions 16–31 (DEYGNPVNQVDQYGNP) are 2 X approximate repeats. Gly residues predominate over residues 74–83 (THTGGVGGYG). One copy of the 2-1 repeat lies at 126 to 133 (KIKEKIPG). Residues 126–190 (KIKEKIPGTE…MDKIKEKLPG (65 aa)) are 2 X approximate repeats. Over residues 144-160 (AGYGSTGYGASGGGIGN) the composition is skewed to gly residues. A compositionally biased stretch (basic and acidic residues) spans 165–188 (YVREEHRVDHGEKKGIMDKIKEKL). The stretch at 183-190 (KIKEKLPG) is one 2-2 repeat.

The protein belongs to the plant dehydrin family. In terms of tissue distribution, shoots, roots, and cotyledon from dehydrating seedlings.

This chain is Dehydrin DHN1 (DHN1), found in Pisum sativum (Garden pea).